The following is a 1009-amino-acid chain: DNA polymerase catalytic subunit (1009 aa).

It belongs to the DNA polymerase type-B family.

It localises to the host nucleus. The catalysed reaction is DNA(n) + a 2'-deoxyribonucleoside 5'-triphosphate = DNA(n+1) + diphosphate. In Saimiri sciureus (Common squirrel monkey), this protein is DNA polymerase catalytic subunit (9).